A 155-amino-acid chain; its full sequence is UPF0225 protein ECA2332 (155 aa).

The protein belongs to the UPF0225 family.

In Pectobacterium atrosepticum (strain SCRI 1043 / ATCC BAA-672) (Erwinia carotovora subsp. atroseptica), this protein is UPF0225 protein ECA2332.